A 428-amino-acid polypeptide reads, in one-letter code: Lysophosphatidic acid phosphatase type 6 (428 aa).

Residues 1-32 constitute a mitochondrion transit peptide; sequence MITGVFSMRLWTPVGVLTSLAYCLHQRRVALA. Positions 58 to 168 are substrate binding; the sequence is RHGARSPRKP…VFIRSTNIFR (111 aa). Catalysis depends on His-59, which acts as the Nucleophile. Asp-335 functions as the Proton donor in the catalytic mechanism.

The protein belongs to the histidine acid phosphatase family. Monomer.

The protein localises to the mitochondrion. It carries out the reaction a phosphate monoester + H2O = an alcohol + phosphate. The catalysed reaction is 1-(9Z-octadecenoyl)-sn-glycero-3-phosphate + H2O = 1-(9Z-octadecenoyl)-sn-glycerol + phosphate. Its function is as follows. Hydrolyzes lysophosphatidic acid (LPA) containing a medium length fatty acid chain to the corresponding monoacylglycerol. Has highest activity with lysophosphatidic acid containing myristate (C14:0), monounsaturated oleate (C18:1) or palmitate (C16:0), and lower activity with C18:0 and C6:0 lysophosphatidic acid. This chain is Lysophosphatidic acid phosphatase type 6 (ACP6), found in Pongo abelii (Sumatran orangutan).